We begin with the raw amino-acid sequence, 90 residues long: DNA-binding protein HU-beta (90 aa).

The protein belongs to the bacterial histone-like protein family. As to quaternary structure, heterodimer of an alpha and a beta chain.

Functionally, histone-like DNA-binding protein which is capable of wrapping DNA to stabilize it, and thus to prevent its denaturation under extreme environmental conditions. In Pseudomonas fluorescens (strain ATCC BAA-477 / NRRL B-23932 / Pf-5), this protein is DNA-binding protein HU-beta (hupB).